The chain runs to 229 residues: MVAFSSLICALTSIASTLAMPTGLEPESSVNVTERGMYDFVLGAHNDHRRRASINYDQNYQTGGQVSYSPSNTGFSVNWNTQDDFVVGVGWTTGSSAPINFGGSFSVNSGTGLLSVYGWSTNPLVEYYIMEDNHNYPAQGTVKGTVTSDGATYTIWENTRVNEPSIQGTATFNQYISVRNSPRTSGTVTVQNHFNAWASLGLHLGQMNYQVVAVEGWGGSGSASQSVSN.

Residues 1–19 (MVAFSSLICALTSIASTLA) form the signal peptide. The propeptide occupies 20-51 (MPTGLEPESSVNVTERGMYDFVLGAHNDHRRR). N-linked (GlcNAc...) asparagine glycosylation occurs at Asn-31. In terms of domain architecture, GH11 spans 42–228 (LGAHNDHRRR…GSGSASQSVS (187 aa)). Tyr-117 serves as a coordination point for substrate. Glu-126 functions as the Nucleophile in the catalytic mechanism. 5 residues coordinate substrate: Tyr-128, Arg-160, Pro-164, Gln-174, and Tyr-209. Glu-215 serves as the catalytic Proton donor.

It belongs to the glycosyl hydrolase 11 (cellulase G) family.

The protein localises to the secreted. It catalyses the reaction Endohydrolysis of (1-&gt;4)-beta-D-xylosidic linkages in xylans.. Its pathway is glycan degradation; xylan degradation. In terms of biological role, glycoside hydrolase involved in the hydrolysis of xylan, a major plant cell wall hemicellulose made up of 1,4-beta-linked D-xylopyranose residues. Catalyzes the endohydrolysis of the main-chain 1,4-beta-glycosidic bonds connecting the xylose subunits yielding various xylooligosaccharides and xylose. This chain is Endo-1,4-beta-xylanase 1, found in Hypocrea jecorina (strain QM6a) (Trichoderma reesei).